The chain runs to 1610 residues: NHS-like protein 1 (1610 aa).

The residue at position 24 (Ser-24) is a Phosphoserine. The tract at residues 145–169 (SPFCDDYQDEDEETDQKCSLSSSEE) is disordered. A phosphoserine mark is found at Ser-198 and Ser-328. Over residues 433-448 (TAQSAGQRESKSSGSS) the composition is skewed to polar residues. Disordered regions lie at residues 433-477 (TAQS…HWNE) and 531-602 (PAHP…DAGS). Ser-568 is modified (phosphoserine). The span at 578–594 (GYSTPTSNMSSCSLDQT) shows a compositional bias: polar residues. Ser-639 carries the phosphoserine modification. Positions 649-667 (QKNQGDRSNYQDKSLSRNI) are enriched in polar residues. Disordered regions lie at residues 649–693 (QKNQ…KKSS), 715–778 (SLPG…SVKS), 791–981 (TGMQ…PPPE), 997–1535 (PRPA…GEGE), and 1566–1610 (EGGL…SEES). The segment covering 715 to 730 (SLPGKSGSSPSQSPCS) has biased composition (low complexity). Composition is skewed to polar residues over residues 740–760 (SRSQ…TPNV), 767–778 (TPSQSDTSSVKS), and 851–865 (SPSS…TPTA). Positions 895–928 (SLISSVSISSSSTSLSSSTSTEGSGTMKKLDPAV) are enriched in low complexity. Composition is skewed to pro residues over residues 929-946 (GSPP…PFPC) and 970-981 (PHSPVFPPPPPE). Positions 1001 to 1011 (LSPILPDSPVS) are enriched in low complexity. Over residues 1012–1031 (LPLPPPLLPSSEPPPAPPLD) the composition is skewed to pro residues. Residues 1041 to 1053 (PFTNSGQPESSRG) show a composition bias toward polar residues. Ser-1089 is modified (phosphoserine). Residues 1122 to 1153 (SRNSTNEMESESQPASVTSSLPTPAKSSSQGD) show a composition bias toward polar residues. Ser-1167 carries the phosphoserine modification. The span at 1180–1193 (PSPSTTPLPDSSPS) shows a compositional bias: low complexity. Position 1233 is a phosphoserine (Ser-1233). Composition is skewed to basic and acidic residues over residues 1240–1249 (GSVHSREAKE) and 1373–1383 (GRRDSDDDHSR). A phosphoserine mark is found at Ser-1386 and Ser-1388. At Thr-1392 the chain carries Phosphothreonine. A compositionally biased stretch (polar residues) spans 1405-1422 (QVGSIQRSIRKSSTSSDN). Positions 1447–1460 (KNTDPRFQRSRSEP) are enriched in basic and acidic residues. Low complexity-rich tracts occupy residues 1461–1474 (SPDA…CSPS) and 1504–1516 (SRTP…SRYS).

Belongs to the NHS family. In terms of tissue distribution, widely expressed. Expressed in adult and fetal brain, fetal eyes, adult lens, kidney, liver and intestine.

In Homo sapiens (Human), this protein is NHS-like protein 1 (NHSL1).